The following is a 182-amino-acid chain: COP9 signalosome complex subunit 8 (182 aa).

The region spanning 1-167 is the PCI domain; the sequence is MHLNKYSEVV…QEAPPARGND (167 aa).

Belongs to the CSN8 family. Essential component of the CSN complex, probably composed of CSN1b, alien/CSN2, CSN3, CSN4, CSN5, CSN6, CSN7 and CSN8.

Its subcellular location is the cytoplasm. It is found in the nucleus. Its function is as follows. Probable component of the COP9 signalosome complex (CSN), a complex involved in various cellular and developmental processes. The CSN complex is an essential regulator of the ubiquitin (Ubl) conjugation pathway by mediating the deneddylation of the cullin subunits of the SCF-type E3 ligase complexes, leading to decrease the Ubl ligase activity of SCF. The CSN complex plays an essential role in oogenesis and embryogenesis and is required for proper photoreceptor R cell differentiation and promote lamina glial cell migration or axon targeting. It also promotes Ubl-dependent degradation of cyclin E (CycE) during early oogenesis. This is COP9 signalosome complex subunit 8 (CSN8) from Drosophila melanogaster (Fruit fly).